The chain runs to 144 residues: uncharacterized protein (144 aa).

Transmembrane regions (helical) follow at residues I10–P30 and Y60–V80.

It localises to the membrane. This is an uncharacterized protein from Saccharomyces cerevisiae (strain ATCC 204508 / S288c) (Baker's yeast).